The sequence spans 485 residues: ATP-dependent protease ATPase subunit HslU (485 aa).

Residues Ile22 and 64 to 69 each bind ATP; that span reads GVGKTE. The segment at 146 to 189 is disordered; that stretch reads KKTAATSAQPQDVSQASSGTTISLPSVSSTAQAEEHKAQNENDM. The span at 149 to 177 shows a compositional bias: polar residues; it reads AATSAQPQDVSQASSGTTISLPSVSSTAQ. Over residues 178 to 189 the composition is skewed to basic and acidic residues; that stretch reads AEEHKAQNENDM. ATP-binding residues include Asp297, Glu363, and Arg435.

The protein belongs to the ClpX chaperone family. HslU subfamily. A double ring-shaped homohexamer of HslV is capped on each side by a ring-shaped HslU homohexamer. The assembly of the HslU/HslV complex is dependent on binding of ATP.

It is found in the cytoplasm. ATPase subunit of a proteasome-like degradation complex; this subunit has chaperone activity. The binding of ATP and its subsequent hydrolysis by HslU are essential for unfolding of protein substrates subsequently hydrolyzed by HslV. HslU recognizes the N-terminal part of its protein substrates and unfolds these before they are guided to HslV for hydrolysis. This is ATP-dependent protease ATPase subunit HslU from Treponema denticola (strain ATCC 35405 / DSM 14222 / CIP 103919 / JCM 8153 / KCTC 15104).